A 608-amino-acid polypeptide reads, in one-letter code: Glutamine--fructose-6-phosphate aminotransferase [isomerizing] (608 aa).

Catalysis depends on Cys-2, which acts as the Nucleophile; for GATase activity. The Glutamine amidotransferase type-2 domain occupies 2–217 (CGIVGILGRG…DGDWAVLTRA (216 aa)). 2 SIS domains span residues 284 to 423 (LPFD…ERGK) and 456 to 598 (LARY…VDQP). The For Fru-6P isomerization activity role is filled by Lys-603.

It is found in the cytoplasm. It catalyses the reaction D-fructose 6-phosphate + L-glutamine = D-glucosamine 6-phosphate + L-glutamate. In terms of biological role, involved in the production of the root hair deformation (HAD) factor specifically on soybean. The sequence is that of Glutamine--fructose-6-phosphate aminotransferase [isomerizing] (nodM) from Bradyrhizobium diazoefficiens (strain JCM 10833 / BCRC 13528 / IAM 13628 / NBRC 14792 / USDA 110).